A 326-amino-acid chain; its full sequence is Ribose-phosphate pyrophosphokinase 4 (326 aa).

Aspartate 140, histidine 142, histidine 151, and aspartate 155 together coordinate Mg(2+).

This sequence belongs to the ribose-phosphate pyrophosphokinase family.

It localises to the cytoplasm. The enzyme catalyses D-ribose 5-phosphate + ATP = 5-phospho-alpha-D-ribose 1-diphosphate + AMP + H(+). The protein operates within metabolic intermediate biosynthesis; 5-phospho-alpha-D-ribose 1-diphosphate biosynthesis; 5-phospho-alpha-D-ribose 1-diphosphate from D-ribose 5-phosphate (route I): step 1/1. Functionally, 5-phosphoribose 1-diphosphate synthase involved in nucleotide, histidine, and tryptophan biosynthesis. Active in heteromultimeric complexes with other 5-phosphoribose 1-diphosphate synthases (PRS2, PRS3, PRS4 and PRS5). The sequence is that of Ribose-phosphate pyrophosphokinase 4 (PRS4) from Saccharomyces cerevisiae (strain ATCC 204508 / S288c) (Baker's yeast).